We begin with the raw amino-acid sequence, 378 residues long: Lipoyl synthase, mitochondrial (378 aa).

Positions 97, 102, 108, 128, 132, 135, and 343 each coordinate [4Fe-4S] cluster. The region spanning 111–332 (GSDKSAATAT…RQRALDMGFL (222 aa)) is the Radical SAM core domain.

This sequence belongs to the radical SAM superfamily. Lipoyl synthase family. Requires [4Fe-4S] cluster as cofactor.

The protein localises to the mitochondrion. It catalyses the reaction [[Fe-S] cluster scaffold protein carrying a second [4Fe-4S](2+) cluster] + N(6)-octanoyl-L-lysyl-[protein] + 2 oxidized [2Fe-2S]-[ferredoxin] + 2 S-adenosyl-L-methionine + 4 H(+) = [[Fe-S] cluster scaffold protein] + N(6)-[(R)-dihydrolipoyl]-L-lysyl-[protein] + 4 Fe(3+) + 2 hydrogen sulfide + 2 5'-deoxyadenosine + 2 L-methionine + 2 reduced [2Fe-2S]-[ferredoxin]. It participates in protein modification; protein lipoylation via endogenous pathway; protein N(6)-(lipoyl)lysine from octanoyl-[acyl-carrier-protein]: step 2/2. In terms of biological role, catalyzes the radical-mediated insertion of two sulfur atoms into the C-6 and C-8 positions of the octanoyl moiety bound to the lipoyl domains of lipoate-dependent enzymes, thereby converting the octanoylated domains into lipoylated derivatives. This is Lipoyl synthase, mitochondrial from Phaeosphaeria nodorum (strain SN15 / ATCC MYA-4574 / FGSC 10173) (Glume blotch fungus).